A 201-amino-acid chain; its full sequence is Ras-related protein RabA (201 aa).

Position 15-22 (15-22) interacts with GTP; that stretch reads GDSGVGKS. The short motif at 37–45 is the Effector region element; it reads YISTIGVDF. Residues 63–67 and 121–124 contribute to the GTP site; these read DTAGQ and NKSD. At C198 the chain carries Cysteine methyl ester. C198 carries S-geranylgeranyl cysteine lipidation. Positions 199–201 are cleaved as a propeptide — removed in mature form; the sequence is IIN.

This sequence belongs to the small GTPase superfamily. Rab family.

It is found in the cell membrane. This Dictyostelium discoideum (Social amoeba) protein is Ras-related protein RabA (rabA).